The chain runs to 88 residues: Small ribosomal subunit protein uS15 (88 aa).

The segment covering 1 to 20 (MLTTQDKQNIIKENQQSEGD) has biased composition (polar residues). Positions 1 to 24 (MLTTQDKQNIIKENQQSEGDTGSP) are disordered.

This sequence belongs to the universal ribosomal protein uS15 family. Part of the 30S ribosomal subunit. Forms a bridge to the 50S subunit in the 70S ribosome, contacting the 23S rRNA.

One of the primary rRNA binding proteins, it binds directly to 16S rRNA where it helps nucleate assembly of the platform of the 30S subunit by binding and bridging several RNA helices of the 16S rRNA. In terms of biological role, forms an intersubunit bridge (bridge B4) with the 23S rRNA of the 50S subunit in the ribosome. This is Small ribosomal subunit protein uS15 from Francisella philomiragia subsp. philomiragia (strain ATCC 25017 / CCUG 19701 / FSC 153 / O#319-036).